We begin with the raw amino-acid sequence, 169 residues long: Ribosome maturation factor RimM (169 aa).

One can recognise a PRC barrel domain in the interval 97–169 (NDEAYFTDLI…KIVVDWEYDY (73 aa)).

It belongs to the RimM family. Binds ribosomal protein uS19.

It is found in the cytoplasm. An accessory protein needed during the final step in the assembly of 30S ribosomal subunit, possibly for assembly of the head region. Essential for efficient processing of 16S rRNA. May be needed both before and after RbfA during the maturation of 16S rRNA. It has affinity for free ribosomal 30S subunits but not for 70S ribosomes. The chain is Ribosome maturation factor RimM from Francisella philomiragia subsp. philomiragia (strain ATCC 25017 / CCUG 19701 / FSC 153 / O#319-036).